The primary structure comprises 39 residues: Photosystem II reaction center protein Y (39 aa).

A helical membrane pass occupies residues 4–22 (TLVVFAPIIAALAWVIFNI).

It belongs to the PsbY family. PSII is composed of 1 copy each of membrane proteins PsbA, PsbB, PsbC, PsbD, PsbE, PsbF, PsbH, PsbI, PsbJ, PsbK, PsbL, PsbM, PsbT, PsbX, PsbY, Psb30/Ycf12, peripheral proteins PsbO, CyanoQ (PsbQ), PsbU, PsbV and a large number of cofactors. It forms dimeric complexes.

Its subcellular location is the cellular thylakoid membrane. Loosely associated component of the core of photosystem II (PSII), it is not always seen in crystals. PSII is a light-driven water plastoquinone oxidoreductase, using light energy to abstract electrons from H(2)O, generating a proton gradient subsequently used for ATP formation. In Prochlorococcus marinus (strain MIT 9515), this protein is Photosystem II reaction center protein Y.